Here is a 291-residue protein sequence, read N- to C-terminus: ATP synthase gamma chain (291 aa).

The protein belongs to the ATPase gamma chain family. F-type ATPases have 2 components, CF(1) - the catalytic core - and CF(0) - the membrane proton channel. CF(1) has five subunits: alpha(3), beta(3), gamma(1), delta(1), epsilon(1). CF(0) has three main subunits: a, b and c.

The protein resides in the cell inner membrane. In terms of biological role, produces ATP from ADP in the presence of a proton gradient across the membrane. The gamma chain is believed to be important in regulating ATPase activity and the flow of protons through the CF(0) complex. In Rhodopseudomonas palustris (strain BisB5), this protein is ATP synthase gamma chain.